We begin with the raw amino-acid sequence, 175 residues long: Large ribosomal subunit protein uL18 (175 aa).

Belongs to the universal ribosomal protein uL18 family. As to quaternary structure, part of the 50S ribosomal subunit. Contacts the 5S and 23S rRNAs.

Its function is as follows. This is one of the proteins that bind and probably mediate the attachment of the 5S RNA into the large ribosomal subunit, where it forms part of the central protuberance. This is Large ribosomal subunit protein uL18 from Methanoculleus marisnigri (strain ATCC 35101 / DSM 1498 / JR1).